A 229-amino-acid chain; its full sequence is Methyltransferase ctvB (229 aa).

This sequence belongs to the methyltransferase superfamily.

The protein operates within mycotoxin biosynthesis. Functionally, methyltransferase; part of the gene cluster that mediates the biosynthesis of citreoviridin, an inhibitor of the of F1-ATPase beta-subunit. The HR-PKS ctvA accepts acetyl-CoA as the starter unit and catalyzes eight iterations of malonyl-CoA extension and four iterations of SAM-dependent methylation at C4, C12, C14, and C16. The KR and DH domains selectively act on the first six iterations to generate the hexaene chain. In the last three iterations, the KR and DH domains terminate their functions to yield a beta,delta-diketo ester moiety, which then undergoes intramolecular cyclization to yield an alpha-pyrone intermediate. Subsequently, ctvB methylates the alpha-pyrone hydroxyl group to generate citreomontanin. In order to form the tetrahydrofuran ring with the correct stereochemistry, the terminal alkenes of citreomontanin need to undergo isomerization to yield a (17Z)-hexaene, a step that could be catalyzed by ctvC. The (17Z)-hexaene then undergoes bisepoxidation by ctvC to form a (17R,16R,15S,14R)-bisepoxide moiety. Lastly, ctvD acts as a regioselective hydrolase to form the tetrahydrofuran ring with the substituents in the correct absolute configuration, completing the biosynthesis of citreoviridin. This chain is Methyltransferase ctvB, found in Aspergillus terreus (strain NIH 2624 / FGSC A1156).